Consider the following 761-residue polypeptide: Protein transport protein SEC23 C (761 aa).

The Zn(2+) site is built by Cys60, Cys63, Cys82, and Cys85. The zinc finger-like stretch occupies residues 60–85 (CRTCRSVLNPYSVVDFSACNWGCPFC).

This sequence belongs to the SEC23/SEC24 family. SEC24 subfamily. In terms of assembly, component of the coat protein complex II (COPII), composed of at least five proteins: the Sec23/24 complex, the Sec13/31 complex and Sar1.

It localises to the cytoplasmic vesicle. It is found in the COPII-coated vesicle membrane. The protein localises to the endoplasmic reticulum membrane. Its subcellular location is the membrane. In terms of biological role, component of the coat protein complex II (COPII) which promotes the formation of transport vesicles from the endoplasmic reticulum (ER). The coat has two main functions, the physical deformation of the endoplasmic reticulum membrane into vesicles and the selection of cargo molecules. In Arabidopsis thaliana (Mouse-ear cress), this protein is Protein transport protein SEC23 C.